Here is a 163-residue protein sequence, read N- to C-terminus: Protein-export protein SecB (163 aa).

The protein belongs to the SecB family. In terms of assembly, homotetramer, a dimer of dimers. One homotetramer interacts with 1 SecA dimer.

The protein localises to the cytoplasm. In terms of biological role, one of the proteins required for the normal export of preproteins out of the cell cytoplasm. It is a molecular chaperone that binds to a subset of precursor proteins, maintaining them in a translocation-competent state. It also specifically binds to its receptor SecA. This chain is Protein-export protein SecB, found in Caulobacter vibrioides (strain ATCC 19089 / CIP 103742 / CB 15) (Caulobacter crescentus).